The sequence spans 77 residues: Large ribosomal subunit protein eL20 (77 aa).

It belongs to the eukaryotic ribosomal protein eL20 family. In terms of assembly, part of the 50S ribosomal subunit. Binds 23S rRNA.

The sequence is that of Large ribosomal subunit protein eL20 from Thermococcus onnurineus (strain NA1).